Reading from the N-terminus, the 253-residue chain is Carboxy-S-adenosyl-L-methionine synthase (253 aa).

Residues Tyr-49, 74-76 (GCS), 98-99 (DN), and Asn-141 each bind S-adenosyl-L-methionine.

The protein belongs to the class I-like SAM-binding methyltransferase superfamily. Cx-SAM synthase family.

The enzyme catalyses prephenate + S-adenosyl-L-methionine = carboxy-S-adenosyl-L-methionine + 3-phenylpyruvate + H2O. Catalyzes the conversion of S-adenosyl-L-methionine (SAM) to carboxy-S-adenosyl-L-methionine (Cx-SAM). This chain is Carboxy-S-adenosyl-L-methionine synthase, found in Trichodesmium erythraeum (strain IMS101).